Here is a 287-residue protein sequence, read N- to C-terminus: MAIKPLDESITSREAITSKADTAPRPTALIFDSGVGGLSVYQEIRQLLPDLHYIYAFDNVAFPYGEKSGEFIVERVLEIVTAVQQRHPLAIVVIACNTASTVSLPALRERFTFPVVGVVPAIKPAVRLTRNGVVGLLATRGTVHASYTQDLIERFATDCKIELLGSSELVELAETKLHGGVVPKEALKKILHPWLAMREPPDTIVLGCTHFPLLTEELAQVLPEGTRMVDSGAAIARRTAWLISSQENVISSDEENIAYCMALNADTDALLPVLQGYGFPSLEKLPI.

Substrate contacts are provided by residues 32–33 (DS) and 64–65 (YG). Cys-96 (proton donor/acceptor) is an active-site residue. Residue 97–98 (NT) coordinates substrate. The active-site Proton donor/acceptor is Cys-208. A substrate-binding site is contributed by 209-210 (TH).

This sequence belongs to the aspartate/glutamate racemases family.

The enzyme catalyses L-glutamate = D-glutamate. It functions in the pathway cell wall biogenesis; peptidoglycan biosynthesis. Provides the (R)-glutamate required for cell wall biosynthesis. The polypeptide is Glutamate racemase (Yersinia enterocolitica serotype O:8 / biotype 1B (strain NCTC 13174 / 8081)).